Here is a 211-residue protein sequence, read N- to C-terminus: LexA repressor (211 aa).

The H-T-H motif DNA-binding region spans 27 to 47 (QTEIARAFGFKGVRAVQHHLD). Catalysis depends on for autocatalytic cleavage activity residues Ser131 and Lys168.

Belongs to the peptidase S24 family. Homodimer.

The catalysed reaction is Hydrolysis of Ala-|-Gly bond in repressor LexA.. In terms of biological role, represses a number of genes involved in the response to DNA damage (SOS response), including recA and lexA. In the presence of single-stranded DNA, RecA interacts with LexA causing an autocatalytic cleavage which disrupts the DNA-binding part of LexA, leading to derepression of the SOS regulon and eventually DNA repair. The protein is LexA repressor of Xylella fastidiosa (strain 9a5c).